A 227-amino-acid chain; its full sequence is Cytochrome c oxidase subunit 2 (227 aa).

Residues 1-14 (MAYPFQLGLQDATS) lie on the Mitochondrial intermembrane side of the membrane. A helical membrane pass occupies residues 15 to 45 (PIMEELANFHDHTLMIVFLISSLVLYIISSM). The Mitochondrial matrix segment spans residues 46-59 (LTTKLTHTSTMDAQ). A helical membrane pass occupies residues 60–87 (EVETIWTILPAVILILIALPSLRILYMM). Topologically, residues 88–227 (DEINNPALTV…HFENWSASMI (140 aa)) are mitochondrial intermembrane. 6 residues coordinate Cu cation: His161, Cys196, Glu198, Cys200, His204, and Met207. Residue Glu198 coordinates Mg(2+).

Belongs to the cytochrome c oxidase subunit 2 family. As to quaternary structure, component of the cytochrome c oxidase (complex IV, CIV), a multisubunit enzyme composed of 14 subunits. The complex is composed of a catalytic core of 3 subunits MT-CO1, MT-CO2 and MT-CO3, encoded in the mitochondrial DNA, and 11 supernumerary subunits COX4I, COX5A, COX5B, COX6A, COX6B, COX6C, COX7A, COX7B, COX7C, COX8 and NDUFA4, which are encoded in the nuclear genome. The complex exists as a monomer or a dimer and forms supercomplexes (SCs) in the inner mitochondrial membrane with NADH-ubiquinone oxidoreductase (complex I, CI) and ubiquinol-cytochrome c oxidoreductase (cytochrome b-c1 complex, complex III, CIII), resulting in different assemblies (supercomplex SCI(1)III(2)IV(1) and megacomplex MCI(2)III(2)IV(2)). Found in a complex with TMEM177, COA6, COX18, COX20, SCO1 and SCO2. Interacts with TMEM177 in a COX20-dependent manner. Interacts with COX20. Interacts with COX16. Requires Cu cation as cofactor.

It is found in the mitochondrion inner membrane. It carries out the reaction 4 Fe(II)-[cytochrome c] + O2 + 8 H(+)(in) = 4 Fe(III)-[cytochrome c] + 2 H2O + 4 H(+)(out). Component of the cytochrome c oxidase, the last enzyme in the mitochondrial electron transport chain which drives oxidative phosphorylation. The respiratory chain contains 3 multisubunit complexes succinate dehydrogenase (complex II, CII), ubiquinol-cytochrome c oxidoreductase (cytochrome b-c1 complex, complex III, CIII) and cytochrome c oxidase (complex IV, CIV), that cooperate to transfer electrons derived from NADH and succinate to molecular oxygen, creating an electrochemical gradient over the inner membrane that drives transmembrane transport and the ATP synthase. Cytochrome c oxidase is the component of the respiratory chain that catalyzes the reduction of oxygen to water. Electrons originating from reduced cytochrome c in the intermembrane space (IMS) are transferred via the dinuclear copper A center (CU(A)) of subunit 2 and heme A of subunit 1 to the active site in subunit 1, a binuclear center (BNC) formed by heme A3 and copper B (CU(B)). The BNC reduces molecular oxygen to 2 water molecules using 4 electrons from cytochrome c in the IMS and 4 protons from the mitochondrial matrix. The polypeptide is Cytochrome c oxidase subunit 2 (MT-CO2) (Malacomys longipes (Big-eared swamp rat)).